A 101-amino-acid polypeptide reads, in one-letter code: Signal recognition particle 19 kDa protein (101 aa).

Belongs to the SRP19 family. As to quaternary structure, part of the signal recognition particle protein translocation system, which is composed of SRP and FtsY. Archaeal SRP consists of a 7S RNA molecule of 300 nucleotides and two protein subunits: SRP54 and SRP19.

It is found in the cytoplasm. In terms of biological role, involved in targeting and insertion of nascent membrane proteins into the cytoplasmic membrane. Binds directly to 7S RNA and mediates binding of the 54 kDa subunit of the SRP. The protein is Signal recognition particle 19 kDa protein of Thermofilum pendens (strain DSM 2475 / Hrk 5).